Consider the following 1984-residue polypeptide: Sodium channel protein type 9 subunit alpha (1984 aa).

At methionine 1–histidine 125 the chain is on the cytoplasmic side. The span at arginine 26–lysine 39 shows a compositional bias: basic and acidic residues. The interval arginine 26–alanine 55 is disordered. An I repeat occupies phenylalanine 112–glutamine 410. The helical transmembrane segment at serine 126–leucine 145 threads the bilayer. At serine 146–glutamate 150 the chain is on the extracellular side. Residues tryptophan 151–leucine 172 traverse the membrane as a helical segment. At alanine 173–arginine 185 the chain is on the cytoplasmic side. A helical transmembrane segment spans residues aspartate 186–phenylalanine 204. Residues valine 205–valine 210 are Extracellular-facing. N-linked (GlcNAc...) asparagine glycosylation occurs at asparagine 209. Residues serine 211 to valine 227 traverse the membrane as a helical segment. Residues isoleucine 228 to serine 241 are Cytoplasmic-facing. The chain crosses the membrane as a helical span at residues valine 242–phenylalanine 267. At methionine 268–threonine 346 the chain is on the extracellular side. A disulfide bridge connects residues cysteine 275 and cysteine 324. The N-linked (GlcNAc...) asparagine glycan is linked to asparagine 283. An intramembrane region (pore-forming) is located at residues phenylalanine 347–tryptophan 363. The Extracellular portion of the chain corresponds to glutamate 364–lysine 376. A helical membrane pass occupies residues threonine 377–alanine 402. Residues methionine 403–phenylalanine 744 are Cytoplasmic-facing. Over residues serine 461 to lysine 471 the composition is skewed to low complexity. Disordered stretches follow at residues serine 461–leucine 542 and isoleucine 576–proline 609. The segment covering lysine 474 to lysine 486 has biased composition (basic residues). The span at serine 489–arginine 509 shows a compositional bias: basic and acidic residues. One copy of the II repeat lies at cysteine 725–glutamine 988. A helical transmembrane segment spans residues valine 745–alanine 761. The Extracellular portion of the chain corresponds to methionine 762–glutamate 770. A helical membrane pass occupies residues phenylalanine 771–isoleucine 795. At alanine 796 to glutamine 804 the chain is on the cytoplasmic side. A helical transmembrane segment spans residues valine 805–glutamate 821. Topologically, residues leucine 822–leucine 830 are extracellular. The chain crosses the membrane as a helical span at residues serine 831–serine 847. Residues tryptophan 848–alanine 864 are Cytoplasmic-facing. Residues leucine 865–phenylalanine 887 form a helical membrane-spanning segment. Topologically, residues glycine 888–histidine 914 are extracellular. A disulfide bridge connects residues cysteine 896 and cysteine 902. Residues serine 915–tryptophan 927 constitute an intramembrane region (pore-forming). Over isoleucine 928–glycine 939 the chain is Extracellular. Cysteine 934 and cysteine 943 are joined by a disulfide. Residues glutamine 940–leucine 966 traverse the membrane as a helical segment. The Cytoplasmic segment spans residues leucine 967–arginine 1185. Disordered stretches follow at residues lysine 1015–arginine 1040 and glutamate 1103–asparagine 1145. The segment covering glycine 1019–asparagine 1035 has biased composition (basic and acidic residues). Residues glycine 1135 to asparagine 1145 are compositionally biased toward acidic residues. One copy of the III repeat lies at threonine 1178–leucine 1486. The helical transmembrane segment at isoleucine 1186–glutamate 1210 threads the bilayer. Topologically, residues aspartate 1211–isoleucine 1222 are extracellular. A helical transmembrane segment spans residues isoleucine 1223 to tyrosine 1248. The Cytoplasmic portion of the chain corresponds to lysine 1249–threonine 1250. The chain crosses the membrane as a helical span at residues tyrosine 1251–leucine 1276. Residues glycine 1277 to lysine 1285 lie on the Extracellular side of the membrane. A helical membrane pass occupies residues serine 1286–phenylalanine 1302. Topologically, residues glutamate 1303–alanine 1315 are cytoplasmic. The chain crosses the membrane as a helical span at residues isoleucine 1316–leucine 1340. Topologically, residues phenylalanine 1341–leucine 1392 are extracellular. Cysteine 1348 and cysteine 1368 are joined by a disulfide. Asparagine 1350, asparagine 1364, and asparagine 1373 each carry an N-linked (GlcNAc...) asparagine glycan. Residues glycine 1393–phenylalanine 1403 constitute an intramembrane region (pore-forming). Residues lysine 1404 to leucine 1429 are Extracellular-facing. A helical transmembrane segment spans residues tyrosine 1430–isoleucine 1455. Residues aspartate 1456–asparagine 1512 are Cytoplasmic-facing. Residue serine 1488 is modified to Phosphoserine; by PKC. Residues isoleucine 1495–glutamine 1793 form an IV repeat. A helical transmembrane segment spans residues glutamine 1513–valine 1532. Residues glutamate 1533–tyrosine 1543 lie on the Extracellular side of the membrane. Residues valine 1544–isoleucine 1565 form a helical membrane-spanning segment. Topologically, residues serine 1566–valine 1574 are cytoplasmic. Residues glycine 1575–methionine 1596 form a helical membrane-spanning segment. Residues isoleucine 1597 to threonine 1605 are Extracellular-facing. The chain crosses the membrane as a helical span at residues leucine 1606–alanine 1625. Residues lysine 1626–serine 1638 lie on the Cytoplasmic side of the membrane. A helical transmembrane segment spans residues leucine 1639–methionine 1661. Residues serine 1662–asparagine 1684 lie on the Extracellular side of the membrane. Residues serine 1685–glycine 1697 constitute an intramembrane region (pore-forming). At tryptophan 1698–proline 1731 the chain is on the extracellular side. Cysteines 1713 and 1728 form a disulfide. A helical transmembrane segment spans residues serine 1732 to isoleucine 1757. The Cytoplasmic portion of the chain corresponds to leucine 1758–lysine 1984. Positions glutamate 1887 to lysine 1916 constitute an IQ domain. Positions lysine 1916–threonine 1930 are enriched in basic and acidic residues. A disordered region spans residues lysine 1916–lysine 1984. Residues valine 1946 to serine 1958 are compositionally biased toward polar residues. Positions threonine 1960 to lysine 1984 are enriched in basic and acidic residues.

The protein belongs to the sodium channel (TC 1.A.1.10) family. Nav1.7/SCN9A subfamily. As to quaternary structure, the Nav1.7 voltage-gated sodium channel consists of an ion-conducting alpha subunit SCN9A which is functional on its own regulated by one or more beta-1 (SCN1B), beta-2 (SCN2B), beta-3 (SCN3B) and beta-4 (SCN4B) subunits. SCN1B and SCN3B are non-covalently associated with SCN9A. SCN2B and SCN4B are disulfide-linked to SCN9A. SCN1B regulates channel inactivation. Interacts with NEDD4 and NEDD4L; regulates Nav1.7 activity most probably through ubiquitination and subsequent endocytosis. Interacts with TMEM233; modulates the gating properties of NaV1.7. Post-translationally, phosphorylation at Ser-1488 by PKC in a highly conserved cytoplasmic loop increases peak sodium currents. Ubiquitinated by NEDD4L; which may promote its endocytosis. Does not seem to be ubiquitinated by NEDD4. In terms of processing, ubiquitinated by NEDD4L; which may promote its endocytosis. As to expression, expressed at high level in the dorsal root ganglion and at much lower levels in the brain, sciatic nerve, nodose ganglia, heart, thyroid and adrenal glands and Schwann cells, but not in the cardiac and skeletal muscles, brain and liver.

The protein localises to the cell membrane. The protein resides in the cell projection. It is found in the neuron projection. Its subcellular location is the axon. The enzyme catalyses Na(+)(in) = Na(+)(out). Inhibited by the conotoxin GVIIJ. In terms of biological role, pore-forming subunit of Nav1.7, a voltage-gated sodium (Nav) channel that directly mediates the depolarizing phase of action potentials in excitable membranes. Navs, also called VGSCs (voltage-gated sodium channels) or VDSCs (voltage-dependent sodium channels), operate by switching between closed and open conformations depending on the voltage difference across the membrane. In the open conformation they allow Na(+) ions to selectively pass through the pore, along their electrochemical gradient. The influx of Na(+) ions provokes membrane depolarization, initiating the propagation of electrical signals throughout cells and tissues. Nav1.7 plays a crucial role in controlling the excitability and action potential propagation from nociceptor neurons, thereby contributing to the sensory perception of pain. The protein is Sodium channel protein type 9 subunit alpha of Rattus norvegicus (Rat).